The sequence spans 224 residues: tRNA pseudouridine synthase B (224 aa).

Aspartate 46 functions as the Nucleophile in the catalytic mechanism.

It belongs to the pseudouridine synthase TruB family. Type 1 subfamily.

It carries out the reaction uridine(55) in tRNA = pseudouridine(55) in tRNA. In terms of biological role, responsible for synthesis of pseudouridine from uracil-55 in the psi GC loop of transfer RNAs. This Methylococcus capsulatus (strain ATCC 33009 / NCIMB 11132 / Bath) protein is tRNA pseudouridine synthase B.